Reading from the N-terminus, the 475-residue chain is Trifunctional enzyme subunit beta, mitochondrial (475 aa).

Residues 1–34 (MTTILTSTFRNLSTTSKWALRSSIRPLSCSSQLH) constitute a mitochondrion transit peptide. Lysine 53 carries the post-translational modification N6-succinyllysine. An N6-acetyllysine; alternate modification is found at lysine 73. Lysine 73 is subject to N6-succinyllysine; alternate. Catalysis depends on cysteine 139, which acts as the Acyl-thioester intermediate. Residues 174–221 (IRHSRNMRKMMLDLNKAKTLGQRLSLLSKFRLNFLSPELPAVAEFSTN) lie within the membrane without spanning it. The residue at position 189 (lysine 189) is an N6-acetyllysine; alternate. At lysine 189 the chain carries N6-succinyllysine; alternate. Lysine 191, lysine 273, and lysine 292 each carry N6-succinyllysine. N6-acetyllysine; alternate is present on lysine 294. Lysine 294 is subject to N6-succinyllysine; alternate. The residue at position 299 (lysine 299) is an N6-acetyllysine. N6-acetyllysine; alternate is present on lysine 333. An N6-succinyllysine; alternate modification is found at lysine 333. N6-acetyllysine is present on residues lysine 349 and lysine 362. The Proton donor/acceptor role is filled by cysteine 459.

This sequence belongs to the thiolase-like superfamily. Thiolase family. Heterotetramer of 2 alpha/HADHA and 2 beta/HADHB subunits; forms the mitochondrial trifunctional enzyme. Also purified as higher order heterooligomers including a 4 alpha/HADHA and 4 beta/HADHB heterooligomer which physiological significance remains unclear. The mitochondrial trifunctional enzyme interacts with MTLN. Interacts with RSAD2/viperin. Post-translationally, acetylation of Lys-202 is observed in liver mitochondria from fasted mice but not from fed mice.

It localises to the mitochondrion. It is found in the mitochondrion inner membrane. The protein resides in the mitochondrion outer membrane. Its subcellular location is the endoplasmic reticulum. The enzyme catalyses an acyl-CoA + acetyl-CoA = a 3-oxoacyl-CoA + CoA. It carries out the reaction butanoyl-CoA + acetyl-CoA = 3-oxohexanoyl-CoA + CoA. It catalyses the reaction hexanoyl-CoA + acetyl-CoA = 3-oxooctanoyl-CoA + CoA. The catalysed reaction is octanoyl-CoA + acetyl-CoA = 3-oxodecanoyl-CoA + CoA. The enzyme catalyses decanoyl-CoA + acetyl-CoA = 3-oxododecanoyl-CoA + CoA. It carries out the reaction dodecanoyl-CoA + acetyl-CoA = 3-oxotetradecanoyl-CoA + CoA. It catalyses the reaction tetradecanoyl-CoA + acetyl-CoA = 3-oxohexadecanoyl-CoA + CoA. Its pathway is lipid metabolism; fatty acid beta-oxidation. Mitochondrial trifunctional enzyme catalyzes the last three of the four reactions of the mitochondrial beta-oxidation pathway. The mitochondrial beta-oxidation pathway is the major energy-producing process in tissues and is performed through four consecutive reactions breaking down fatty acids into acetyl-CoA. Among the enzymes involved in this pathway, the trifunctional enzyme exhibits specificity for long-chain fatty acids. Mitochondrial trifunctional enzyme is a heterotetrameric complex composed of two proteins, the trifunctional enzyme subunit alpha/HADHA carries the 2,3-enoyl-CoA hydratase and the 3-hydroxyacyl-CoA dehydrogenase activities, while the trifunctional enzyme subunit beta/HADHB described here bears the 3-ketoacyl-CoA thiolase activity. The sequence is that of Trifunctional enzyme subunit beta, mitochondrial (Hadhb) from Mus musculus (Mouse).